We begin with the raw amino-acid sequence, 466 residues long: CCA-adding enzyme (466 aa).

S55 and R58 together coordinate ATP. CTP contacts are provided by S55 and R58. D67, D69, and D118 together coordinate Mg(2+). Positions 141, 161, and 170 each coordinate ATP. The CTP site is built by H141, K161, and Y170.

Belongs to the tRNA nucleotidyltransferase/poly(A) polymerase family. Archaeal CCA-adding enzyme subfamily. Homodimer. The cofactor is Mg(2+).

It catalyses the reaction a tRNA precursor + 2 CTP + ATP = a tRNA with a 3' CCA end + 3 diphosphate. The enzyme catalyses a tRNA with a 3' CCA end + 2 CTP + ATP = a tRNA with a 3' CCACCA end + 3 diphosphate. Catalyzes the addition and repair of the essential 3'-terminal CCA sequence in tRNAs without using a nucleic acid template. Adds these three nucleotides in the order of C, C, and A to the tRNA nucleotide-73, using CTP and ATP as substrates and producing inorganic pyrophosphate. tRNA 3'-terminal CCA addition is required both for tRNA processing and repair. Also involved in tRNA surveillance by mediating tandem CCA addition to generate a CCACCA at the 3' terminus of unstable tRNAs. While stable tRNAs receive only 3'-terminal CCA, unstable tRNAs are marked with CCACCA and rapidly degraded. This is CCA-adding enzyme from Haloarcula marismortui (strain ATCC 43049 / DSM 3752 / JCM 8966 / VKM B-1809) (Halobacterium marismortui).